We begin with the raw amino-acid sequence, 342 residues long: Eukaryotic translation initiation factor 3 subunit F (342 aa).

Positions Val30–Gly166 constitute an MPN domain. The interval Thr310–Ala342 is disordered. A compositionally biased stretch (basic and acidic residues) spans Gly317–Arg331.

This sequence belongs to the eIF-3 subunit F family. In terms of assembly, component of the eukaryotic translation initiation factor 3 (eIF-3) complex.

It is found in the cytoplasm. Functionally, component of the eukaryotic translation initiation factor 3 (eIF-3) complex, which is involved in protein synthesis of a specialized repertoire of mRNAs and, together with other initiation factors, stimulates binding of mRNA and methionyl-tRNAi to the 40S ribosome. The eIF-3 complex specifically targets and initiates translation of a subset of mRNAs involved in cell proliferation. This chain is Eukaryotic translation initiation factor 3 subunit F, found in Phaeosphaeria nodorum (strain SN15 / ATCC MYA-4574 / FGSC 10173) (Glume blotch fungus).